The sequence spans 130 residues: Small ribosomal subunit protein uS11c (130 aa).

The protein belongs to the universal ribosomal protein uS11 family. Part of the 30S ribosomal subunit.

Its subcellular location is the plastid. It localises to the chloroplast. The chain is Small ribosomal subunit protein uS11c from Bigelowiella natans (Pedinomonas minutissima).